A 235-amino-acid polypeptide reads, in one-letter code: Fibrillarin-like rRNA/tRNA 2'-O-methyltransferase (235 aa).

Residues 91 to 92 (TT), 110 to 111 (EF), 137 to 138 (DA), and 157 to 160 (DVAQ) each bind S-adenosyl-L-methionine.

The protein belongs to the methyltransferase superfamily. Fibrillarin family. Interacts with nop5. Component of box C/D small ribonucleoprotein (sRNP) particles that contain rpl7ae, FlpA and nop5, plus a guide RNA.

Functionally, involved in pre-rRNA and tRNA processing. Utilizes the methyl donor S-adenosyl-L-methionine to catalyze the site-specific 2'-hydroxyl methylation of ribose moieties in rRNA and tRNA. Site specificity is provided by a guide RNA that base pairs with the substrate. Methylation occurs at a characteristic distance from the sequence involved in base pairing with the guide RNA. This Pyrobaculum aerophilum (strain ATCC 51768 / DSM 7523 / JCM 9630 / CIP 104966 / NBRC 100827 / IM2) protein is Fibrillarin-like rRNA/tRNA 2'-O-methyltransferase.